The following is a 768-amino-acid chain: Probable beta-glucosidase M (768 aa).

A signal peptide spans 1–19; the sequence is MHAIAGLTGLLAGVSLSYA. 3 N-linked (GlcNAc...) asparagine glycosylation sites follow: N25, N72, and N259. The active site involves D287. 7 N-linked (GlcNAc...) asparagine glycosylation sites follow: N315, N322, N394, N434, N472, N543, and N651.

Belongs to the glycosyl hydrolase 3 family.

Its subcellular location is the secreted. It carries out the reaction Hydrolysis of terminal, non-reducing beta-D-glucosyl residues with release of beta-D-glucose.. Its pathway is glycan metabolism; cellulose degradation. In terms of biological role, beta-glucosidases are one of a number of cellulolytic enzymes involved in the degradation of cellulosic biomass. Catalyzes the last step releasing glucose from the inhibitory cellobiose. This chain is Probable beta-glucosidase M (bglM), found in Aspergillus oryzae (strain ATCC 42149 / RIB 40) (Yellow koji mold).